Here is a 177-residue protein sequence, read N- to C-terminus: ATP synthase subunit delta (177 aa).

It belongs to the ATPase delta chain family. As to quaternary structure, F-type ATPases have 2 components, F(1) - the catalytic core - and F(0) - the membrane proton channel. F(1) has five subunits: alpha(3), beta(3), gamma(1), delta(1), epsilon(1). F(0) has three main subunits: a(1), b(2) and c(10-14). The alpha and beta chains form an alternating ring which encloses part of the gamma chain. F(1) is attached to F(0) by a central stalk formed by the gamma and epsilon chains, while a peripheral stalk is formed by the delta and b chains.

It localises to the cell inner membrane. Functionally, f(1)F(0) ATP synthase produces ATP from ADP in the presence of a proton or sodium gradient. F-type ATPases consist of two structural domains, F(1) containing the extramembraneous catalytic core and F(0) containing the membrane proton channel, linked together by a central stalk and a peripheral stalk. During catalysis, ATP synthesis in the catalytic domain of F(1) is coupled via a rotary mechanism of the central stalk subunits to proton translocation. In terms of biological role, this protein is part of the stalk that links CF(0) to CF(1). It either transmits conformational changes from CF(0) to CF(1) or is implicated in proton conduction. In Aliivibrio fischeri (strain ATCC 700601 / ES114) (Vibrio fischeri), this protein is ATP synthase subunit delta.